A 337-amino-acid polypeptide reads, in one-letter code: Lipoyl synthase (337 aa).

Positions 81, 86, 92, 107, 111, 114, and 323 each coordinate [4Fe-4S] cluster. In terms of domain architecture, Radical SAM core spans 93-312 (FSHGTATFMI…EEYGNALGFS (220 aa)).

Belongs to the radical SAM superfamily. Lipoyl synthase family. The cofactor is [4Fe-4S] cluster.

It is found in the cytoplasm. It catalyses the reaction [[Fe-S] cluster scaffold protein carrying a second [4Fe-4S](2+) cluster] + N(6)-octanoyl-L-lysyl-[protein] + 2 oxidized [2Fe-2S]-[ferredoxin] + 2 S-adenosyl-L-methionine + 4 H(+) = [[Fe-S] cluster scaffold protein] + N(6)-[(R)-dihydrolipoyl]-L-lysyl-[protein] + 4 Fe(3+) + 2 hydrogen sulfide + 2 5'-deoxyadenosine + 2 L-methionine + 2 reduced [2Fe-2S]-[ferredoxin]. It functions in the pathway protein modification; protein lipoylation via endogenous pathway; protein N(6)-(lipoyl)lysine from octanoyl-[acyl-carrier-protein]: step 2/2. Its function is as follows. Catalyzes the radical-mediated insertion of two sulfur atoms into the C-6 and C-8 positions of the octanoyl moiety bound to the lipoyl domains of lipoate-dependent enzymes, thereby converting the octanoylated domains into lipoylated derivatives. The sequence is that of Lipoyl synthase from Xanthomonas campestris pv. campestris (strain 8004).